We begin with the raw amino-acid sequence, 144 residues long: Transcriptional regulator SlyA (144 aa).

One can recognise an HTH marR-type domain in the interval 2-135 (ESTLGSDLAR…LVGLIGKLEQ (134 aa)). The H-T-H motif DNA-binding region spans 49–72 (QIQLAKAIGIEQPSLVRTLDQLEE).

This sequence belongs to the SlyA family. In terms of assembly, homodimer.

Functionally, transcription regulator that can specifically activate or repress expression of target genes. In Serratia proteamaculans (strain 568), this protein is Transcriptional regulator SlyA.